The following is a 1050-amino-acid chain: Ankyrin repeat domain-containing protein 27 (1050 aa).

A sufficient for GEF activity towards RAB21 region spans residues 1–372 (MALYDEDLLK…RQGSLSAKPP (372 aa)). The 139-residue stretch at 233–371 (ASEDAAFNKI…IRQGSLSAKP (139 aa)) folds into the VPS9 domain. ANK repeat units follow at residues 396–426 (SPTD…DKDA), 462–491 (RGHT…VVNA), 495–524 (HGAT…SAEV), 528–560 (NGNT…RLDI), 564–593 (KGDT…SPEI), and 597–627 (LKET…RQKS). The segment at 396 to 460 (SPTDCLFKHI…PSVVTPFSRD (65 aa)) is sufficient for interaction with VPS29. Positions 451 to 600 (PSVVTPFSRD…PEIQNRLKET (150 aa)) are interaction with RAB38. Residues 451–730 (PSVVTPFSRD…APAQKRLAKV (280 aa)) form an interaction with RAB32 region. Residues 630 to 665 (APVQSLQRSVDSISQESSTSSFSSMSAGSRQEETKK) are disordered. The span at 638–658 (SVDSISQESSTSSFSSMSAGS) shows a compositional bias: low complexity. The segment at 658–707 (SRQEETKKDYREVEKLLRAVADGDLEMVRYLLEWTEEDLEDAEDTVSAVD) is required for interaction with VAMP7. 5 ANK repeats span residues 668-698 (REVE…DLED), 743-772 (DGSS…NAGA), 776-805 (DQAV…KPNK), 809-838 (SGNT…AINT), and 842-871 (KGNT…SVQV). The tract at residues 692-746 (TEEDLEDAEDTVSAVDPEFCHPLCQCPKCAPAQKRLAKVPASGLGVNVTSQDGSS) is sufficient for interaction with VPS29. Phosphoserine is present on residues Ser-962 and Ser-970. The disordered stretch occupies residues 987–1050 (PAQSGSHAAE…TPQEVSASRS (64 aa)). The span at 994–1007 (AAEKGNSDWPERPR) shows a compositional bias: basic and acidic residues. Thr-1023 carries the phosphothreonine modification. The segment covering 1040–1050 (STPQEVSASRS) has biased composition (polar residues).

Interacts with RAB21 (GDP-bound form), VPS29, KIF5A, KIF5C, GOLGA4. Interacts with RAB32 (GTP-bound form), RAB38 (GTP-bound form), VAMP7. Interacts with low affinity with RAB5. ANKRD27:RAB32 heterodimers can homodimerize to form tetramers. Can interact with RAB38 or RAB32, VPS29 and VAMP7 simultaneously. A decreased interaction with RAB32 seen in the presence of SGSM2.

It localises to the early endosome. The protein resides in the late endosome. It is found in the cytoplasmic vesicle membrane. Its subcellular location is the lysosome. The protein localises to the cell membrane. It localises to the melanosome. Functionally, may be a guanine exchange factor (GEF) for Rab21, Rab32 and Rab38 and regulate endosome dynamics. May regulate the participation of VAMP7 in membrane fusion events; in vitro inhibits VAMP7-mediated SNARE complex formation by trapping VAMP7 in a closed, fusogenically inactive conformation. Involved in peripheral melanosomal distribution of TYRP1 in melanocytes; the function, which probably is implicating vesicle-trafficking, includes cooperation with Rab32, Rab38 and VAMP7. Involved in the regulation of neurite growth; the function seems to require its GEF activity, probably towards Rab21, and VAMP7 but not Rab32/38. Proposed to be involved in Golgi sorting of VAMP7 and transport of VAMP7 vesicles to the cell surface; the function seems to implicate kinesin heavy chain isoform 5 proteins, GOLGA4, RAB21 and MACF1. Required for the colocalization of VAMP7 and Rab21, probably on TGN sites. Involved in GLUT1 endosome-to-plasma membrane trafficking; the function is dependent of association with VPS29. Regulates the proper trafficking of melanogenic enzymes TYR, TYRP1 and DCT/TYRP2 to melanosomes in melanocytes. The sequence is that of Ankyrin repeat domain-containing protein 27 (ANKRD27) from Pongo abelii (Sumatran orangutan).